We begin with the raw amino-acid sequence, 526 residues long: Lysine--tRNA ligase (526 aa).

The Mg(2+) site is built by E431 and E438.

It belongs to the class-II aminoacyl-tRNA synthetase family. Homodimer. Requires Mg(2+) as cofactor.

The protein localises to the cytoplasm. It catalyses the reaction tRNA(Lys) + L-lysine + ATP = L-lysyl-tRNA(Lys) + AMP + diphosphate. This Chlamydia felis (strain Fe/C-56) (Chlamydophila felis) protein is Lysine--tRNA ligase.